The primary structure comprises 359 residues: Aromatic amino acid aminotransferase (359 aa).

A compositionally biased stretch (basic and acidic residues) spans 1–12 (MSETSPKLRAEL). Residues 1 to 21 (MSETSPKLRAELEGIPTYKPG) form a disordered region. Position 223 is an N6-(pyridoxal phosphate)lysine (Lys223).

It belongs to the class-II pyridoxal-phosphate-dependent aminotransferase family. As to quaternary structure, homodimer. It depends on pyridoxal 5'-phosphate as a cofactor.

The enzyme catalyses an aromatic L-alpha-amino acid + 2-oxoglutarate = an aromatic oxo-acid + L-glutamate. In terms of biological role, aminotransferase that catalyzes the conversion of aromatic amino acids and 2-oxoglutarate into corresponding aromatic oxo acids and L-glutamate. The sequence is that of Aromatic amino acid aminotransferase from Streptomyces coelicolor (strain ATCC BAA-471 / A3(2) / M145).